Reading from the N-terminus, the 201-residue chain is Prostamide/prostaglandin F synthase (201 aa).

It belongs to the peroxiredoxin-like PRXL2 family. Prostamide/prostaglandin F synthase subfamily.

It is found in the cytoplasm. The protein resides in the cytosol. It carries out the reaction prostaglandin H2 + [thioredoxin]-dithiol = prostaglandin F2alpha + [thioredoxin]-disulfide. The catalysed reaction is prostamide F2alpha + [thioredoxin]-disulfide = prostamide H2 + [thioredoxin]-dithiol. In terms of biological role, catalyzes the reduction of prostaglandin-ethanolamide H(2) (prostamide H(2)) to prostamide F(2alpha) with NADPH as proton donor. Also able to reduce prostaglandin H(2) to prostaglandin F(2alpha). The protein is Prostamide/prostaglandin F synthase (prxl2b) of Danio rerio (Zebrafish).